Here is a 325-residue protein sequence, read N- to C-terminus: tRNA U34 carboxymethyltransferase (325 aa).

Carboxy-S-adenosyl-L-methionine is bound by residues lysine 91, tryptophan 105, lysine 110, glycine 130, 152–154, methionine 196, tyrosine 200, and arginine 315; that span reads DPS.

Belongs to the class I-like SAM-binding methyltransferase superfamily. CmoB family. In terms of assembly, homotetramer.

It carries out the reaction carboxy-S-adenosyl-L-methionine + 5-hydroxyuridine(34) in tRNA = 5-carboxymethoxyuridine(34) in tRNA + S-adenosyl-L-homocysteine + H(+). Functionally, catalyzes carboxymethyl transfer from carboxy-S-adenosyl-L-methionine (Cx-SAM) to 5-hydroxyuridine (ho5U) to form 5-carboxymethoxyuridine (cmo5U) at position 34 in tRNAs. This is tRNA U34 carboxymethyltransferase from Aeromonas hydrophila subsp. hydrophila (strain ATCC 7966 / DSM 30187 / BCRC 13018 / CCUG 14551 / JCM 1027 / KCTC 2358 / NCIMB 9240 / NCTC 8049).